A 98-amino-acid chain; its full sequence is DNA-directed RNA polymerase subunit Rpo11 (98 aa).

The protein belongs to the archaeal Rpo11/eukaryotic RPB11/RPC19 RNA polymerase subunit family. Part of the RNA polymerase complex.

The protein resides in the cytoplasm. It carries out the reaction RNA(n) + a ribonucleoside 5'-triphosphate = RNA(n+1) + diphosphate. In terms of biological role, DNA-dependent RNA polymerase (RNAP) catalyzes the transcription of DNA into RNA using the four ribonucleoside triphosphates as substrates. The chain is DNA-directed RNA polymerase subunit Rpo11 from Korarchaeum cryptofilum (strain OPF8).